An 862-amino-acid chain; its full sequence is DNA replication licensing factor MCM4 (862 aa).

A compositionally biased stretch (low complexity) spans Met1–Arg10. Disordered regions lie at residues Met1–Pro71 and Thr90–Arg121. Position 2 is an N-acetylserine (Ser2). Ser6 carries the phosphoserine modification. 2 positions are modified to phosphothreonine: Thr7 and Thr19. Residues Ser26, Ser31, and Ser32 each carry the phosphoserine modification. Residues Pro61–Pro71 are compositionally biased toward polar residues. At Thr101 the chain carries Phosphothreonine. Position 104 is a phosphoserine (Ser104). Thr109 carries the phosphothreonine modification. 4 positions are modified to phosphoserine: Ser119, Ser130, Ser141, and Ser144. Position 219 is an N6-acetyllysine (Lys219). A Glycyl lysine isopeptide (Lys-Gly) (interchain with G-Cter in SUMO2) cross-link involves residue Lys438. Lys449 is subject to N6-acetyllysine. Residues Ile457 to Val666 enclose the MCM domain. Residues Tyr470, Arg496, Lys515, Ser516, Asn617, Arg642, Arg731, and Glu734 each coordinate ATP. Positions Ser641 to Asp644 match the Arginine finger motif. A Glycyl lysine isopeptide (Lys-Gly) (interchain with G-Cter in SUMO2) cross-link involves residue Lys797. Lys857 carries the N6-acetyllysine modification.

Belongs to the MCM family. Component of the MCM2-7 complex. The complex forms a toroidal hexameric ring with the proposed subunit order MCM2-MCM6-MCM4-MCM7-MCM3-MCM5. Component of the CMG helicase complex, a hexameric ring of related MCM2-7 subunits stabilized by CDC45 and the tetrameric GINS complex. Interacts with MCMBP. Sumoylated; SUMO2 modified in response to stress caused by inhibition of proteasome activity (in vitro).

It is found in the nucleus. It localises to the chromosome. The catalysed reaction is ATP + H2O = ADP + phosphate + H(+). Functionally, acts as a component of the MCM2-7 complex (MCM complex) which is the replicative helicase essential for 'once per cell cycle' DNA replication initiation and elongation in eukaryotic cells. Core component of CDC45-MCM-GINS (CMG) helicase, the molecular machine that unwinds template DNA during replication, and around which the replisome is built. The active ATPase sites in the MCM2-7 ring are formed through the interaction surfaces of two neighboring subunits such that a critical structure of a conserved arginine finger motif is provided in trans relative to the ATP-binding site of the Walker A box of the adjacent subunit. The six ATPase active sites, however, are likely to contribute differentially to the complex helicase activity. In Mus musculus (Mouse), this protein is DNA replication licensing factor MCM4 (Mcm4).